The chain runs to 318 residues: DNA-directed RNA polymerase subunit alpha 2 (318 aa).

The tract at residues 1–227 (MALENLLHPT…NQLRNIVDIE (227 aa)) is alpha N-terminal domain (alpha-NTD). The segment at 242 to 318 (INPILLKHVE…TLIENWPQDL (77 aa)) is alpha C-terminal domain (alpha-CTD).

The protein belongs to the RNA polymerase alpha chain family. As to quaternary structure, homodimer. The RNAP catalytic core consists of 2 alpha, 1 beta, 1 beta' and 1 omega subunit. When a sigma factor is associated with the core the holoenzyme is formed, which can initiate transcription.

The catalysed reaction is RNA(n) + a ribonucleoside 5'-triphosphate = RNA(n+1) + diphosphate. Functionally, DNA-dependent RNA polymerase catalyzes the transcription of DNA into RNA using the four ribonucleoside triphosphates as substrates. The chain is DNA-directed RNA polymerase subunit alpha 2 from Francisella tularensis subsp. novicida (strain U112).